Here is a 106-residue protein sequence, read N- to C-terminus: Large ribosomal subunit protein eL42 (106 aa).

Belongs to the eukaryotic ribosomal protein eL42 family.

The sequence is that of Large ribosomal subunit protein eL42 (RPL44) from Candida tropicalis (Yeast).